We begin with the raw amino-acid sequence, 280 residues long: Probable holocytochrome-c-type synthase (280 aa).

A disordered region spans residues methionine 1 to serine 95. 2 HRM repeats span residues glutamine 35–proline 40 and alanine 56–alanine 61.

Belongs to the cytochrome c-type heme lyase family.

The protein localises to the mitochondrion inner membrane. It carries out the reaction holo-[cytochrome c] = apo-[cytochrome c] + heme b. In terms of biological role, probable lyase that catalyzes the covalent linking of the heme group to the cytochrome C apoprotein to produce the mature functional cytochrome. The polypeptide is Probable holocytochrome-c-type synthase (cchl-1) (Caenorhabditis elegans).